The following is a 677-amino-acid chain: MTQVAKKILVTCALPYANGSIHLGHMLEHIQADVWVRYQRMRGHEVNFICADDAHGTPIMLKAQQLGITPEQMIAEMSKEHQTDFAGFNISYDNYHSTHSDENRVLSELIYTRLKENGFIKNRTISQLYDPEKGMFLPDRFVKGTCPKCKSPDQYGDNCEVCGATYSPTELIEPKSVVSGATPVMRDSEHFFFDLPSFSEMLQAWTRSGALQEQVANKMQEWFESGLQQWDISRDAPYFGFEIPNAPGKYFYVWLDAPIGYMGSFKNLCDKRGDTVSFDEYWKKDSDAELYHVIGKDIVYFHSLFWPAMLEGSGFRKPTNLFVHGYVTVNGAKMSKSRGTFIKASTWLNHFDADSLRYYYAAKLSSRIDDIDLNLEDFVQRVNADIVNKVVNLASRNAGFIAKRFDGELAAELADPALYQTFTDAAAVIGEAWESREFGKAIREIMALADLANRYVDEQAPWVVAKQEGRDADLQAICSMGINLFRVLMTYLKPVLPELCARAEAFLNVELTWDGVNAPLLGHKVNSFKALYNRIEMKQVEALVEASKEEVKAAAAPVTGELAENPIQETITFDDFAKIDLRVALIENAEFVDGSDKLLRLTLDLDGEKRNVFSGIRSAYPDPQALIGRLTVMVANLAPRKMRFGISEGMVMAAGPGGKDIFLLSPDSGAKPGQQVK.

The short motif at 15-25 (PYANGSIHLGH) is the 'HIGH' region element. The Zn(2+) site is built by Cys146, Cys149, Cys159, and Cys162. The 'KMSKS' region signature appears at 333–337 (KMSKS). Lys336 provides a ligand contact to ATP. Residues 575–677 (DFAKIDLRVA…SGAKPGQQVK (103 aa)) enclose the tRNA-binding domain.

It belongs to the class-I aminoacyl-tRNA synthetase family. MetG type 1 subfamily. In terms of assembly, homodimer. Zn(2+) serves as cofactor.

Its subcellular location is the cytoplasm. It carries out the reaction tRNA(Met) + L-methionine + ATP = L-methionyl-tRNA(Met) + AMP + diphosphate. Its function is as follows. Is required not only for elongation of protein synthesis but also for the initiation of all mRNA translation through initiator tRNA(fMet) aminoacylation. The chain is Methionine--tRNA ligase from Cronobacter sakazakii (strain ATCC BAA-894) (Enterobacter sakazakii).